A 355-amino-acid polypeptide reads, in one-letter code: UDP-N-acetylglucosamine--N-acetylmuramyl-(pentapeptide) pyrophosphoryl-undecaprenol N-acetylglucosamine transferase (355 aa).

UDP-N-acetyl-alpha-D-glucosamine-binding positions include 14–16 (TGG), Asn126, Arg162, Ser190, Ile243, 262–267 (ALTVSE), and Gln287.

It belongs to the glycosyltransferase 28 family. MurG subfamily.

It localises to the cell inner membrane. The catalysed reaction is di-trans,octa-cis-undecaprenyl diphospho-N-acetyl-alpha-D-muramoyl-L-alanyl-D-glutamyl-meso-2,6-diaminopimeloyl-D-alanyl-D-alanine + UDP-N-acetyl-alpha-D-glucosamine = di-trans,octa-cis-undecaprenyl diphospho-[N-acetyl-alpha-D-glucosaminyl-(1-&gt;4)]-N-acetyl-alpha-D-muramoyl-L-alanyl-D-glutamyl-meso-2,6-diaminopimeloyl-D-alanyl-D-alanine + UDP + H(+). The protein operates within cell wall biogenesis; peptidoglycan biosynthesis. Its function is as follows. Cell wall formation. Catalyzes the transfer of a GlcNAc subunit on undecaprenyl-pyrophosphoryl-MurNAc-pentapeptide (lipid intermediate I) to form undecaprenyl-pyrophosphoryl-MurNAc-(pentapeptide)GlcNAc (lipid intermediate II). The protein is UDP-N-acetylglucosamine--N-acetylmuramyl-(pentapeptide) pyrophosphoryl-undecaprenol N-acetylglucosamine transferase of Vibrio campbellii (strain ATCC BAA-1116).